The following is a 294-amino-acid chain: Small ribosomal subunit protein uS2 (294 aa).

Over residues 261–274 (MDEDADSKKSKAEE) the composition is skewed to basic and acidic residues. Residues 261–294 (MDEDADSKKSKAEEPVIPTAEEPAITTIEVDQNE) are disordered.

The protein belongs to the universal ribosomal protein uS2 family.

This is Small ribosomal subunit protein uS2 from Leptospira borgpetersenii serovar Hardjo-bovis (strain JB197).